The sequence spans 143 residues: Large ribosomal subunit protein uL11 (143 aa).

This sequence belongs to the universal ribosomal protein uL11 family. As to quaternary structure, part of the ribosomal stalk of the 50S ribosomal subunit. Interacts with L10 and the large rRNA to form the base of the stalk. L10 forms an elongated spine to which L12 dimers bind in a sequential fashion forming a multimeric L10(L12)X complex. Post-translationally, one or more lysine residues are methylated.

Its function is as follows. Forms part of the ribosomal stalk which helps the ribosome interact with GTP-bound translation factors. In Pseudomonas savastanoi pv. phaseolicola (strain 1448A / Race 6) (Pseudomonas syringae pv. phaseolicola (strain 1448A / Race 6)), this protein is Large ribosomal subunit protein uL11.